Reading from the N-terminus, the 779-residue chain is Molybdenum cofactor sulfurase (779 aa).

At K247 the chain carries N6-(pyridoxal phosphate)lysine. C409 is a catalytic residue. Residues 624-779 (SQSLGLEGVR…LTCGDVIVVS (156 aa)) enclose the MOSC domain. S732 carries the phosphoserine modification.

The protein belongs to the class-V pyridoxal-phosphate-dependent aminotransferase family. MOCOS subfamily. The cofactor is pyridoxal 5'-phosphate.

The catalysed reaction is Mo-molybdopterin + L-cysteine + AH2 = thio-Mo-molybdopterin + L-alanine + A + H2O. It functions in the pathway cofactor biosynthesis; molybdopterin biosynthesis. Its function is as follows. Sulfurates the molybdenum cofactor. Sulfation of molybdenum is essential for xanthine dehydrogenase (XDH) and aldehyde oxidase (ADO) enzymes in which molybdenum cofactor is liganded by 1 oxygen and 1 sulfur atom in active form. This Drosophila mojavensis (Fruit fly) protein is Molybdenum cofactor sulfurase.